The chain runs to 449 residues: Protein cortex (449 aa).

WD repeat units lie at residues 108–148, 149–188, 198–237, 283–327, 345–382, and 386–425; these read TYSY…ISQG, YAEY…KIDS, NRNC…ISWR, DSDW…VRDT, TGEL…DQWG, and SGLD…KKMK. Residues 386–397 carry the D-box motif; that stretch reads SGLDRVRTMVFS.

It belongs to the WD repeat CORT family.

The protein resides in the cytoplasm. Its function is as follows. Controls wing pigmentation patterning by regulating scale cell development, thereby playing a key role in mimicry and crypsis. Probably acts as an activator of the anaphase promoting complex/cyclosome (APC/C) that promotes the ubiquitin ligase activity and substrate specificity of the APC/C. This is Protein cortex from Heliconius erato (Crimson patched longwing butterfly).